The chain runs to 445 residues: Tubby-like F-box protein 10 (445 aa).

Residues 57 to 112 enclose the F-box domain; that stretch reads SRWANLPPELLFDVIKRLEESESNWPARKHVVACASVCRSWRAMCQEIVLGPEICG. Residues 382 to 398 show a composition bias toward low complexity; the sequence is PQPQGTGAAAAPTSAPA. Positions 382 to 401 are disordered; sequence PQPQGTGAAAAPTSAPAHPE.

This sequence belongs to the TUB family. As to quaternary structure, part of a SCF (ASK-cullin-F-box) protein ligase complex. Interacts with SKP1A/ASK1. As to expression, ubiquitous.

It is found in the nucleus. The protein operates within protein modification; protein ubiquitination. Component of SCF(ASK-cullin-F-box) E3 ubiquitin ligase complexes, which may mediate the ubiquitination and subsequent proteasomal degradation of target proteins. This Arabidopsis thaliana (Mouse-ear cress) protein is Tubby-like F-box protein 10.